The primary structure comprises 176 residues: ATP synthase subunit delta (176 aa).

Belongs to the ATPase delta chain family. As to quaternary structure, F-type ATPases have 2 components, F(1) - the catalytic core - and F(0) - the membrane proton channel. F(1) has five subunits: alpha(3), beta(3), gamma(1), delta(1), epsilon(1). F(0) has three main subunits: a(1), b(2) and c(10-14). The alpha and beta chains form an alternating ring which encloses part of the gamma chain. F(1) is attached to F(0) by a central stalk formed by the gamma and epsilon chains, while a peripheral stalk is formed by the delta and b chains.

The protein resides in the cell inner membrane. Functionally, f(1)F(0) ATP synthase produces ATP from ADP in the presence of a proton or sodium gradient. F-type ATPases consist of two structural domains, F(1) containing the extramembraneous catalytic core and F(0) containing the membrane proton channel, linked together by a central stalk and a peripheral stalk. During catalysis, ATP synthesis in the catalytic domain of F(1) is coupled via a rotary mechanism of the central stalk subunits to proton translocation. This protein is part of the stalk that links CF(0) to CF(1). It either transmits conformational changes from CF(0) to CF(1) or is implicated in proton conduction. The sequence is that of ATP synthase subunit delta from Nitratiruptor sp. (strain SB155-2).